We begin with the raw amino-acid sequence, 217 residues long: Protein-L-isoaspartate O-methyltransferase (217 aa).

Ser-64 is an active-site residue.

It belongs to the methyltransferase superfamily. L-isoaspartyl/D-aspartyl protein methyltransferase family.

The protein resides in the cytoplasm. It catalyses the reaction [protein]-L-isoaspartate + S-adenosyl-L-methionine = [protein]-L-isoaspartate alpha-methyl ester + S-adenosyl-L-homocysteine. Catalyzes the methyl esterification of L-isoaspartyl residues in peptides and proteins that result from spontaneous decomposition of normal L-aspartyl and L-asparaginyl residues. It plays a role in the repair and/or degradation of damaged proteins. The chain is Protein-L-isoaspartate O-methyltransferase from Azorhizobium caulinodans (strain ATCC 43989 / DSM 5975 / JCM 20966 / LMG 6465 / NBRC 14845 / NCIMB 13405 / ORS 571).